A 341-amino-acid chain; its full sequence is Protein FAM50A (341 aa).

Disordered regions lie at residues 1–27 and 80–147; these read MAQYKGAASEAGRAMQLMKKREREREQ and LVKE…EIEE. Residues 80-115 show a composition bias toward basic and acidic residues; that stretch reads LVKEREKQLAKKEQSKELQLKLEKQKEKKRKEEQKR. Over residues 125 to 147 the composition is skewed to acidic residues; it reads DEGEDEEEEEEEEEEEEEDEIEE.

Belongs to the FAM50 family.

The protein localises to the nucleus. Probably involved in the regulation of pre-mRNA splicing. This chain is Protein FAM50A (fam50a), found in Danio rerio (Zebrafish).